Here is a 959-residue protein sequence, read N- to C-terminus: Isoleucine--tRNA ligase (959 aa).

A 'HIGH' region motif is present at residues 66 to 76; the sequence is PYANGDIHIGH. Position 592 (Glu592) interacts with L-isoleucyl-5'-AMP. The 'KMSKS' region signature appears at 633–637; that stretch reads KMSKS. Lys636 serves as a coordination point for ATP. Positions 922, 925, 942, and 945 each coordinate Zn(2+).

It belongs to the class-I aminoacyl-tRNA synthetase family. IleS type 1 subfamily. In terms of assembly, monomer. Zn(2+) serves as cofactor.

It is found in the cytoplasm. The enzyme catalyses tRNA(Ile) + L-isoleucine + ATP = L-isoleucyl-tRNA(Ile) + AMP + diphosphate. Functionally, catalyzes the attachment of isoleucine to tRNA(Ile). As IleRS can inadvertently accommodate and process structurally similar amino acids such as valine, to avoid such errors it has two additional distinct tRNA(Ile)-dependent editing activities. One activity is designated as 'pretransfer' editing and involves the hydrolysis of activated Val-AMP. The other activity is designated 'posttransfer' editing and involves deacylation of mischarged Val-tRNA(Ile). This chain is Isoleucine--tRNA ligase, found in Cupriavidus metallidurans (strain ATCC 43123 / DSM 2839 / NBRC 102507 / CH34) (Ralstonia metallidurans).